Consider the following 172-residue polypeptide: Protein-export protein SecB (172 aa).

Belongs to the SecB family. As to quaternary structure, homotetramer, a dimer of dimers. One homotetramer interacts with 1 SecA dimer.

It localises to the cytoplasm. One of the proteins required for the normal export of preproteins out of the cell cytoplasm. It is a molecular chaperone that binds to a subset of precursor proteins, maintaining them in a translocation-competent state. It also specifically binds to its receptor SecA. In Xylella fastidiosa (strain 9a5c), this protein is Protein-export protein SecB.